The primary structure comprises 661 residues: UvrABC system protein B (661 aa).

Positions 26-181 constitute a Helicase ATP-binding domain; it reads KGIQEGRKHQ…LLRKLVDIQY (156 aa). 39 to 46 is a binding site for ATP; sequence GATGTGKT. Residues 92–115 carry the Beta-hairpin motif; that stretch reads YYDYYQPEAYVPQTDTFIEKDASI. In terms of domain architecture, Helicase C-terminal spans 430 to 596; the sequence is QIDDLIGEIQ…TINKEIRDVI (167 aa). The region spanning 625–660 is the UVR domain; sequence QKVVEQMEHEMKEAARALDFERAAELRDLLLELKAE.

This sequence belongs to the UvrB family. In terms of assembly, forms a heterotetramer with UvrA during the search for lesions. Interacts with UvrC in an incision complex.

Its subcellular location is the cytoplasm. Its function is as follows. The UvrABC repair system catalyzes the recognition and processing of DNA lesions. A damage recognition complex composed of 2 UvrA and 2 UvrB subunits scans DNA for abnormalities. Upon binding of the UvrA(2)B(2) complex to a putative damaged site, the DNA wraps around one UvrB monomer. DNA wrap is dependent on ATP binding by UvrB and probably causes local melting of the DNA helix, facilitating insertion of UvrB beta-hairpin between the DNA strands. Then UvrB probes one DNA strand for the presence of a lesion. If a lesion is found the UvrA subunits dissociate and the UvrB-DNA preincision complex is formed. This complex is subsequently bound by UvrC and the second UvrB is released. If no lesion is found, the DNA wraps around the other UvrB subunit that will check the other stand for damage. This is UvrABC system protein B from Bacillus velezensis (strain DSM 23117 / BGSC 10A6 / LMG 26770 / FZB42) (Bacillus amyloliquefaciens subsp. plantarum).